The primary structure comprises 999 residues: Hypoxia up-regulated protein 1 (999 aa).

A signal peptide spans 1–32 (MAATVRRQRPRRLLCWTLVAVLLADLLALSDT). N-linked (GlcNAc...) asparagine glycans are attached at residues Asn155, Asn222, and Asn515. The tract at residues 564 to 694 (VEDSPEEEST…KKQKPARKQK (131 aa)) is disordered. Position 567 is a phosphoserine (Ser567). A compositionally biased stretch (polar residues) spans 574–583 (LTKLGNTISS). Residue Asn596 is glycosylated (N-linked (GlcNAc...) asparagine). 2 stretches are compositionally biased toward basic and acidic residues: residues 611–626 (GSKD…KEET) and 641–670 (PKGD…EEKG). N-linked (GlcNAc...) asparagine glycans are attached at residues Asn830, Asn862, and Asn869. Lys883 is subject to N6-acetyllysine. Residues 909-999 (AKFTKPRPRP…QKRSSKNDEL (91 aa)) are disordered. 2 N-linked (GlcNAc...) asparagine glycosylation sites follow: Asn922 and Asn931. Basic and acidic residues predominate over residues 949–962 (EEAKPILEPDKEET). Positions 996 to 999 (NDEL) match the Prevents secretion from ER motif.

Belongs to the heat shock protein 70 family. Part of a large chaperone multiprotein complex comprising DNAJB11, HSP90B1, HSPA5, HYOU, PDIA2, PDIA4, PDIA6, PPIB, SDF2L1, UGGT1 and very small amounts of ERP29, but not, or at very low levels, CALR nor CANX.

The protein localises to the endoplasmic reticulum lumen. Has a pivotal role in cytoprotective cellular mechanisms triggered by oxygen deprivation. Promotes HSPA5/BiP-mediated ATP nucleotide exchange and thereby activates the unfolded protein response (UPR) pathway in the presence of endoplasmic reticulum stress. May play a role as a molecular chaperone and participate in protein folding. The sequence is that of Hypoxia up-regulated protein 1 (HYOU1) from Cricetulus griseus (Chinese hamster).